The primary structure comprises 43 residues: MSLLLAKLPEAYAPFDPIVDVLPIIPVLFLLLAFVWQASVSFR.

The propeptide occupies 1-6; sequence MSLLLA. The chain crosses the membrane as a helical span at residues 18-38; the sequence is IVDVLPIIPVLFLLLAFVWQA.

It belongs to the PsbK family. As to quaternary structure, PSII is composed of 1 copy each of membrane proteins PsbA, PsbB, PsbC, PsbD, PsbE, PsbF, PsbH, PsbI, PsbJ, PsbK, PsbL, PsbM, PsbT, PsbX, PsbY, PsbZ, Psb30/Ycf12, at least 3 peripheral proteins of the oxygen-evolving complex and a large number of cofactors. It forms dimeric complexes.

Its subcellular location is the plastid. The protein resides in the chloroplast thylakoid membrane. In terms of biological role, one of the components of the core complex of photosystem II (PSII). PSII is a light-driven water:plastoquinone oxidoreductase that uses light energy to abstract electrons from H(2)O, generating O(2) and a proton gradient subsequently used for ATP formation. It consists of a core antenna complex that captures photons, and an electron transfer chain that converts photonic excitation into a charge separation. The polypeptide is Photosystem II reaction center protein K (Oltmannsiellopsis viridis (Marine flagellate)).